The sequence spans 192 residues: Ion-translocating oxidoreductase complex subunit B (192 aa).

The tract at residues 1-26 (MEMIVIAVVALTLLALLFGMLLGYAS) is hydrophobic. Residues 32 to 91 (EEDPVVDQVDELLPQSQCGQCGYPGCRPYAEAVANNGEQINRCVPGGEPVMQKIATLLNV) enclose the 4Fe-4S domain. The [4Fe-4S] cluster site is built by C49, C52, C57, C74, C117, C120, C123, C127, C147, C150, C153, and C157. 2 4Fe-4S ferredoxin-type domains span residues 108 to 137 (MLAVIDEPNCIGCTKCIQACPVDAIVGATR) and 138 to 167 (AMHTVMSDLCTGCNLCVDPCPTQCIELRPA).

The protein belongs to the 4Fe4S bacterial-type ferredoxin family. RnfB subfamily. The complex is composed of six subunits: RnfA, RnfB, RnfC, RnfD, RnfE and RnfG. The cofactor is [4Fe-4S] cluster.

The protein resides in the cell inner membrane. In terms of biological role, part of a membrane-bound complex that couples electron transfer with translocation of ions across the membrane. In Cronobacter sakazakii (strain ATCC BAA-894) (Enterobacter sakazakii), this protein is Ion-translocating oxidoreductase complex subunit B.